The sequence spans 279 residues: Protoheme IX farnesyltransferase (279 aa).

9 helical membrane-spanning segments follow: residues 1 to 21, 29 to 49, 79 to 99, 101 to 121, 128 to 148, 156 to 176, 200 to 220, 225 to 245, and 254 to 274; these read MIKPGIILGNIICLSGGFFLA, IFFLKTVFGLILIISSSCILN, ILFFFSIILLILGLLVFYIYI, FLCTIISFFGFFFYVYLYSYL, FSTFVGSVSGSLPPIIGYVAV, CTILFFMFSFWQIAHSYSIII, IIFISICILNLFFFNFLLYFF, FFYFLYTSFFIFLWFIFSFLS, and IWSRIMFFFSIFIIFMISFLM.

It belongs to the UbiA prenyltransferase family. Protoheme IX farnesyltransferase subfamily.

Its subcellular location is the cell membrane. It carries out the reaction heme b + (2E,6E)-farnesyl diphosphate + H2O = Fe(II)-heme o + diphosphate. It participates in porphyrin-containing compound metabolism; heme O biosynthesis; heme O from protoheme: step 1/1. In terms of biological role, converts heme B (protoheme IX) to heme O by substitution of the vinyl group on carbon 2 of heme B porphyrin ring with a hydroxyethyl farnesyl side group. The sequence is that of Protoheme IX farnesyltransferase from Buchnera aphidicola subsp. Cinara cedri (strain Cc).